Reading from the N-terminus, the 215-residue chain is Probable phosphoglycerate mutase GpmB (215 aa).

Residues 8–15 (RHGETQWN), 21–22 (QG), Arg58, Lys60, 82–85 (ELDM), 104–105 (RR), and 151–152 (GI) contribute to the substrate site. His9 serves as the catalytic Tele-phosphohistidine intermediate. The active-site Proton donor/acceptor is the Glu82.

It belongs to the phosphoglycerate mutase family. GpmB subfamily.

It carries out the reaction (2R)-2-phosphoglycerate = (2R)-3-phosphoglycerate. It functions in the pathway carbohydrate degradation; glycolysis; pyruvate from D-glyceraldehyde 3-phosphate: step 3/5. In Salmonella arizonae (strain ATCC BAA-731 / CDC346-86 / RSK2980), this protein is Probable phosphoglycerate mutase GpmB.